The chain runs to 275 residues: MENRYSVHPEQAKRFTTAELREHFLIESLFVENKLNMFYSHEDRVVIGGAVPVKESIALDAGDFLKTDYFLERREIGIVNVGKPGAVKVGDEEYVLEHKDFLYIGLGNKDVFFSSLNEGGAKFYFISATAHQKYPVQKASLSELPYDHLGEEASSNVRNLYKVIHADGIQSCQLMMGITFLEPNNTWNTMPAHVHDRRMEVYLYLDLAEDAKVFHFMGEPTETRHLVVGNEQAVISPAWSVHSGSGTSNYCFIWAMAGENYTFKDMDAVPMNVIR.

Zn(2+)-binding residues include histidine 193, histidine 195, glutamate 200, and histidine 242.

Belongs to the KduI family. The cofactor is Zn(2+).

The catalysed reaction is 5-dehydro-4-deoxy-D-glucuronate = 3-deoxy-D-glycero-2,5-hexodiulosonate. It participates in glycan metabolism; pectin degradation; 2-dehydro-3-deoxy-D-gluconate from pectin: step 4/5. In terms of biological role, catalyzes the isomerization of 5-dehydro-4-deoxy-D-glucuronate to 3-deoxy-D-glycero-2,5-hexodiulosonate. This is 4-deoxy-L-threo-5-hexosulose-uronate ketol-isomerase from Bacillus licheniformis (strain ATCC 14580 / DSM 13 / JCM 2505 / CCUG 7422 / NBRC 12200 / NCIMB 9375 / NCTC 10341 / NRRL NRS-1264 / Gibson 46).